We begin with the raw amino-acid sequence, 194 residues long: Putative NAD(P)H nitroreductase YfhC (194 aa).

Residues 20 to 22 (RRS), 147 to 148 (KI), and arginine 188 contribute to the FMN site.

It belongs to the nitroreductase family. FMN is required as a cofactor.

The polypeptide is Putative NAD(P)H nitroreductase YfhC (yfhC) (Bacillus subtilis (strain 168)).